The primary structure comprises 453 residues: MQAIAKNDIKTGTVVDLTHEGHGVVKIDRFPIFIPQALINEQIEYKIIKVKKNFAIGKLLNINTRSENRVAPPCIYYERCGGCQLQHLSYEAQLEMKKEQVINLFQRKAHFDNSKINDTVGMTDPWRYRNKSQIPVGKNEQNEVIMGFYRQRSHDIIDMESCLIQDSQHQEVMNEVKSILKDLNVSIYQEQLKKGLMRHLVVRTGYHTDEMMIIFVTNGKKWPQKNAVVEKILDAFPNVTSIKQNINDSHSNVIMGRQSITLYGKDTIIDQLTDSTFKISDQSFYQINSEQTEKLYNKAIEYAQLTGNEVVLDTYCGIGTIGLYMAPLAKHVYGVEVVPSAIEDAQQNATINQCNNTTFVCGKAEEVILQWKAQGIKPDVVMVDPPRKGCDETFIQTLLTLEPKRIVYISCNPATQQRDALLLAEKYQLEEVTPVDMFPQTTHVETVALFNLK.

Residues Cys74, Cys80, Cys83, and Cys162 each contribute to the [4Fe-4S] cluster site. S-adenosyl-L-methionine contacts are provided by Gln286, Tyr315, Glu336, and Asp384. Cys411 serves as the catalytic Nucleophile.

It belongs to the class I-like SAM-binding methyltransferase superfamily. RNA M5U methyltransferase family.

This is an uncharacterized protein from Staphylococcus aureus (strain COL).